Reading from the N-terminus, the 177-residue chain is Nucleoside triphosphate/diphosphate phosphatase (177 aa).

The active-site Proton donor is the Arg23. Asn87, Asp103, Asp105, Asp107, Asp120, and Glu123 together coordinate Mg(2+).

This sequence belongs to the Ntdp family. Mg(2+) is required as a cofactor.

The enzyme catalyses a ribonucleoside 5'-triphosphate + H2O = a ribonucleoside 5'-diphosphate + phosphate + H(+). The catalysed reaction is a ribonucleoside 5'-diphosphate + H2O = a ribonucleoside 5'-phosphate + phosphate + H(+). Has nucleoside phosphatase activity towards nucleoside triphosphates and nucleoside diphosphates. This chain is Nucleoside triphosphate/diphosphate phosphatase, found in Streptococcus gordonii (strain Challis / ATCC 35105 / BCRC 15272 / CH1 / DL1 / V288).